Reading from the N-terminus, the 548-residue chain is T-complex protein 1 subunit theta (548 aa).

Ala2 carries the post-translational modification N-acetylalanine. Residue Ser23 is modified to Phosphoserine. Tyr30 is subject to Phosphotyrosine. ADP contacts are provided by Tyr47 and Gly48. A Mg(2+)-binding site is contributed by Asp99. Positions 100, 101, 102, and 103 each coordinate ADP. Residues Gly100, Thr101, and Asn102 each coordinate ATP. Ser162 is modified (phosphoserine). Residues Met169, Ser170, and Lys171 each coordinate ADP. ATP-binding residues include Ser170 and Lys171. Residues Lys224, Lys254, and Lys260 each participate in a glycyl lysine isopeptide (Lys-Gly) (interchain with G-Cter in SUMO2) cross-link. A phosphoserine mark is found at Ser269 and Ser317. 2 positions are modified to N6-acetyllysine: Lys318 and Lys400. Position 412 (Gly412) interacts with ADP. Position 412 (Gly412) interacts with ATP. Residue Lys459 forms a Glycyl lysine isopeptide (Lys-Gly) (interchain with G-Cter in SUMO1) linkage. Lys466 carries the post-translational modification N6-acetyllysine. Asp499 contributes to the ADP binding site. The ATP site is built by Asp499 and Lys504. A Phosphotyrosine modification is found at Tyr505. Residues 529–548 (PAGGPKPPSGKKDWDDDQND) are disordered. A Glycyl lysine isopeptide (Lys-Gly) (interchain with G-Cter in SUMO2) cross-link involves residue Lys534. Ser537 carries the post-translational modification Phosphoserine. Lys539 participates in a covalent cross-link: Glycyl lysine isopeptide (Lys-Gly) (interchain with G-Cter in SUMO2).

The protein belongs to the TCP-1 chaperonin family. In terms of assembly, component of the chaperonin-containing T-complex (TRiC), a hexadecamer composed of two identical back-to-back stacked rings enclosing a protein folding chamber. Each ring is made up of eight different subunits: TCP1/CCT1, CCT2, CCT3, CCT4, CCT5, CCT6A/CCT6, CCT7, CCT8. Interacts with PACRG. Interacts with DNAAF4. Interacts with synaptic plasticity regulator PANTS.

The protein resides in the cytoplasm. It localises to the cytoskeleton. Its subcellular location is the microtubule organizing center. The protein localises to the centrosome. It is found in the cilium basal body. It catalyses the reaction ATP + H2O = ADP + phosphate + H(+). Functionally, component of the chaperonin-containing T-complex (TRiC), a molecular chaperone complex that assists the folding of actin, tubulin and other proteins upon ATP hydrolysis. The TRiC complex mediates the folding of WRAP53/TCAB1, thereby regulating telomere maintenance. As part of the TRiC complex may play a role in the assembly of BBSome, a complex involved in ciliogenesis regulating transports vesicles to the cilia. This Mus musculus (Mouse) protein is T-complex protein 1 subunit theta (Cct8).